Consider the following 514-residue polypeptide: Sugar transport protein 4 (514 aa).

At 1 to 22 (MAGGFVSQTPGVRNYNYKLTPK) the chain is on the cytoplasmic side. 12 helical membrane-spanning segments follow: residues 23-43 (VFVT…DLGI), 80-100 (LLTL…LFAS), 117-137 (FTFF…MLLI), 140-160 (ILLG…LSEM), 172-192 (GFQV…YFTA), 202-222 (ISLG…LILP), 283-303 (LIMT…VITF), 321-341 (LSAM…VFTV), 348-368 (ILFL…GAMI), 387-407 (LIVA…GPLG), 426-446 (INVS…LTML), and 451-471 (FGLF…IYLM). The Cytoplasmic portion of the chain corresponds to 472 to 514 (LPETKNVPIEEMNRVWKAHWFWGKFIPDEAVNMGAAEMQQKSV).

It belongs to the major facilitator superfamily. Sugar transporter (TC 2.A.1.1) family. In terms of tissue distribution, mostly in flowers and roots, especially in anthers, including pollen, and root tips. Also present in some hydathodes.

The protein resides in the cell membrane. Functionally, mediates an active uptake of hexoses, probably by sugar/hydrogen symport. Can transport glucose, methylglucose, galactose, xylose and mannose, but not fructose. The polypeptide is Sugar transport protein 4 (STP4) (Arabidopsis thaliana (Mouse-ear cress)).